A 287-amino-acid polypeptide reads, in one-letter code: Small ribosomal subunit biogenesis GTPase RsgA (287 aa).

A CP-type G domain is found at 61-218 (ISQLKRPAVA…MVDTPGFSSL (158 aa)). GTP is bound by residues 110 to 113 (NKLD) and 161 to 169 (GPSGVGKST). Zn(2+)-binding residues include C242, C247, H249, and C255.

It belongs to the TRAFAC class YlqF/YawG GTPase family. RsgA subfamily. Monomer. Associates with 30S ribosomal subunit, binds 16S rRNA. The cofactor is Zn(2+).

Its subcellular location is the cytoplasm. One of several proteins that assist in the late maturation steps of the functional core of the 30S ribosomal subunit. Helps release RbfA from mature subunits. May play a role in the assembly of ribosomal proteins into the subunit. Circularly permuted GTPase that catalyzes slow GTP hydrolysis, GTPase activity is stimulated by the 30S ribosomal subunit. The protein is Small ribosomal subunit biogenesis GTPase RsgA of Clostridium kluyveri (strain NBRC 12016).